The following is a 493-amino-acid chain: Ferruginol synthase 1 (493 aa).

The chain crosses the membrane as a helical span at residues 2 to 22 (DSFPLLAALFFILAATWFISF). Cys-437 serves as a coordination point for heme.

Belongs to the cytochrome P450 family. The cofactor is heme. In terms of tissue distribution, expressed in leaf glandular trichomes.

The protein resides in the membrane. The enzyme catalyses abieta-8,11,13-triene + reduced [NADPH--hemoprotein reductase] + O2 = ferruginol + oxidized [NADPH--hemoprotein reductase] + H2O + H(+). The catalysed reaction is ferruginol + reduced [NADPH--hemoprotein reductase] + O2 = 11-hydroxyferruginol + oxidized [NADPH--hemoprotein reductase] + H2O + H(+). It carries out the reaction miltiradiene + 2 reduced [NADPH--hemoprotein reductase] + 2 O2 = 11-oxomiltiradiene + 2 oxidized [NADPH--hemoprotein reductase] + 3 H2O + 2 H(+). It functions in the pathway secondary metabolite biosynthesis; terpenoid biosynthesis. Functionally, monooxygenase involved in the biosynthesis of labdane-related diterpenes natural products. Catalyzes the oxidation of abietatriene to produce ferruginol. Catalyzes the oxidation of ferruginol at C-12 to produce 11-hydroxyferruginol. Ferruginol and 11-hydroxyferruginol are intermediates in the biosynthesis of carnosate, a potent antioxidant. May also convert miltiradiene into 11-oxomiltiradiene. The polypeptide is Ferruginol synthase 1 (Rosmarinus officinalis (Rosemary)).